The following is a 365-amino-acid chain: Methylthioribose-1-phosphate isomerase (365 aa).

The Proton donor role is filled by Asp255.

It belongs to the eIF-2B alpha/beta/delta subunits family. MtnA subfamily.

The protein localises to the cytoplasm. It is found in the nucleus. It catalyses the reaction 5-(methylsulfanyl)-alpha-D-ribose 1-phosphate = 5-(methylsulfanyl)-D-ribulose 1-phosphate. The protein operates within amino-acid biosynthesis; L-methionine biosynthesis via salvage pathway; L-methionine from S-methyl-5-thio-alpha-D-ribose 1-phosphate: step 1/6. Catalyzes the interconversion of methylthioribose-1-phosphate (MTR-1-P) into methylthioribulose-1-phosphate (MTRu-1-P). The protein is Methylthioribose-1-phosphate isomerase of Drosophila willistoni (Fruit fly).